The chain runs to 354 residues: Tryptophan--tRNA ligase (354 aa).

ATP contacts are provided by residues 13–15 (QPT) and 21–22 (GN). Positions 14 to 22 (PTGNLHLGN) match the 'HIGH' region motif. L-tryptophan is bound at residue Asp137. Residues 149–151 (GDD), Val208, and 217–221 (KMSKS) each bind ATP. Positions 217–221 (KMSKS) match the 'KMSKS' region motif.

It belongs to the class-I aminoacyl-tRNA synthetase family. In terms of assembly, homodimer.

The protein resides in the cytoplasm. It catalyses the reaction tRNA(Trp) + L-tryptophan + ATP = L-tryptophyl-tRNA(Trp) + AMP + diphosphate + H(+). Catalyzes the attachment of tryptophan to tRNA(Trp). This is Tryptophan--tRNA ligase from Rhizobium meliloti (strain 1021) (Ensifer meliloti).